A 216-amino-acid polypeptide reads, in one-letter code: Adenylate kinase (216 aa).

ATP is bound at residue 10 to 15 (GAGKGT). The segment at 30-59 (STGDIFRKNISEKTPLGVKAKEYMDKGQLV) is NMP. Residues threonine 31, arginine 36, 57–59 (QLV), 85–88 (GFPR), and glutamine 92 each bind AMP. Residues 126-163 (GRRVCPSCGASYHIKFNPPKIEGLCDVCKKEVIQRKDD) are LID. Arginine 127 is an ATP binding site. Zn(2+)-binding residues include cysteine 130 and cysteine 133. Residue 136–137 (SY) participates in ATP binding. 2 residues coordinate Zn(2+): cysteine 150 and cysteine 153. Residues arginine 160 and arginine 171 each coordinate AMP. Glutamine 199 lines the ATP pocket.

It belongs to the adenylate kinase family. Monomer.

It localises to the cytoplasm. It carries out the reaction AMP + ATP = 2 ADP. It participates in purine metabolism; AMP biosynthesis via salvage pathway; AMP from ADP: step 1/1. Its function is as follows. Catalyzes the reversible transfer of the terminal phosphate group between ATP and AMP. Plays an important role in cellular energy homeostasis and in adenine nucleotide metabolism. The chain is Adenylate kinase from Clostridium novyi (strain NT).